Reading from the N-terminus, the 205-residue chain is MGNKWSKGWPAVRERIRQTPPAPPAAEGVGAASQDLAKHGAISSSNTATNNPDCAWLEAQEESEEVGFPVRPQVPLRPMTFKGAFDLSFFLKEKGGLDGLIYSKKRQEILDLWVYHTQGFFPDWHNYTPGPGTRYPLCFGWCFKLVPVDPREVEEANTGENNCLLHPMSQHGMDDDEREVLMWKFDSSLARKHLAREMHPEFYKD.

A lipid anchor (N-myristoyl glycine; by host) is attached at Gly-2. Ser-6 bears the Phosphoserine; by host mark. The acidic; interacts with host PACS1 and PACS2; stabilizes the interaction of NEF/MHC-I with host AP1M1; necessary for MHC-I internalization stretch occupies residues 61–65 (EESEE). The tract at residues 69-78 (PVRPQVPLRP) is SH3-binding; interaction with Src family tyrosine kinases. A PxxP; stabilizes the interaction of NEF/MHC-I with host AP1M1; necessary for MHC-I internalization motif is present at residues 72-75 (PQVP). The tract at residues 108–124 (EILDLWVYHTQGFFPDW) is mediates dimerization, Nef-PTE1 interaction. Residues 148-180 (VDPREVEEANTGENNCLLHPMSQHGMDDDEREV) are binding to ATP6V1H. Residues 164–165 (LL) carry the Dileucine internalization motif; necessary for CD4 internalization motif. A Diacidic; necessary for CD4 internalization motif is present at residues 174–175 (DD).

The protein belongs to the lentivirus primate group Nef protein family. In terms of assembly, monomer; cytosolic form. Homodimer; membrane bound form. Interacts with Nef associated p21-activated kinase (PAK2); this interaction activates PAK2. Associates with the Nef-MHC-I-AP1 complex; this complex is required for MHC-I internalization. Interacts (via C-terminus) with host PI3-kinase. Interacts with host PACS1; this interaction seems to be weak. Interacts with host PACS2. Interacts with host LCK and MAPK3; these interactions inhibit the kinase activity of the latter. Interacts with host ATP6V1H; this interaction may play a role in CD4 endocytosis. Associates with the CD4-Nef-AP2 complex; this complex is required for CD4 internalization. Interacts with host AP2 subunit alpha and AP2 subunit sigma2. Interacts with TCR-zeta chain; this interaction up-regulates the Fas ligand (FasL) surface expression. Interacts with host HCK, LYN, and SRC; these interactions activate the Src family kinases. Interacts with MAP3K5; this interaction inhibits the Fas and TNFR-mediated death signals. Interacts with beta-COP and PTE1. Interacts with human RACK1; this increases Nef phosphorylation by PKC. Interacts with TP53; this interaction decreases the half-life of TP53, protecting the infected cell against p53-mediated apoptosis. The virion-associated Nef proteins are cleaved by the viral protease to release the soluble C-terminal core protein. Nef is probably cleaved concomitantly with viral structural proteins on maturation of virus particles. Post-translationally, myristoylated. In terms of processing, phosphorylated on serine residues, probably by host PKCdelta and theta.

Its subcellular location is the host cell membrane. The protein resides in the virion. It is found in the secreted. It localises to the host Golgi apparatus membrane. In terms of biological role, factor of infectivity and pathogenicity, required for optimal virus replication. Alters numerous pathways of T-lymphocyte function and down-regulates immunity surface molecules in order to evade host defense and increase viral infectivity. Alters the functionality of other immunity cells, like dendritic cells, monocytes/macrophages and NK cells. In infected CD4(+) T-lymphocytes, down-regulates the surface MHC-I, mature MHC-II, CD4, CD28, CCR5 and CXCR4 molecules. Mediates internalization and degradation of host CD4 through the interaction of with the cytoplasmic tail of CD4, the recruitment of AP-2 (clathrin adapter protein complex 2), internalization through clathrin coated pits, and subsequent transport to endosomes and lysosomes for degradation. Diverts host MHC-I molecules to the trans-Golgi network-associated endosomal compartments by an endocytic pathway to finally target them for degradation. MHC-I down-regulation may involve AP-1 (clathrin adapter protein complex 1) or possibly Src family kinase-ZAP70/Syk-PI3K cascade recruited by PACS2. In consequence infected cells are masked for immune recognition by cytotoxic T-lymphocytes. Decreasing the number of immune receptors also prevents reinfection by more HIV particles (superinfection). Down-regulates host SERINC3 and SERINC5 thereby excluding these proteins from the viral particles. Virion infectivity is drastically higher when SERINC3 or SERINC5 are excluded from the viral envelope, because these host antiviral proteins impair the membrane fusion event necessary for subsequent virion penetration. Its function is as follows. Bypasses host T-cell signaling by inducing a transcriptional program nearly identical to that of anti-CD3 cell activation. Interaction with TCR-zeta chain up-regulates the Fas ligand (FasL). Increasing surface FasL molecules and decreasing surface MHC-I molecules on infected CD4(+) cells send attacking cytotoxic CD8+ T-lymphocytes into apoptosis. Functionally, plays a role in optimizing the host cell environment for viral replication without causing cell death by apoptosis. Protects the infected cells from apoptosis in order to keep them alive until the next virus generation is ready to strike. Inhibits the Fas and TNFR-mediated death signals by blocking MAP3K5/ASK1. Decreases the half-life of TP53, protecting the infected cell against p53-mediated apoptosis. Inhibits the apoptotic signals regulated by the Bcl-2 family proteins through the formation of a Nef/PI3-kinase/PAK2 complex that leads to activation of PAK2 and induces phosphorylation of host BAD. In terms of biological role, extracellular Nef protein targets CD4(+) T-lymphocytes for apoptosis by interacting with CXCR4 surface receptors. This Human immunodeficiency virus type 1 group M subtype A (isolate Z321) (HIV-1) protein is Protein Nef.